A 337-amino-acid polypeptide reads, in one-letter code: Anaerobic sulfite reductase subunit C (337 aa).

Residues Cys115, Cys121, Cys153, Cys157, Cys180, Cys183, Cys186, Cys190, Cys212, Cys215, Cys218, and Cys222 each contribute to the [4Fe-4S] cluster site. Cys157 serves as a coordination point for siroheme. 4Fe-4S ferredoxin-type domains are found at residues 171 to 200 (AKMRFTADRCIGCGACVKACSHHAVGCLAL) and 203 to 232 (GKAVKEESACIGCGECVLACPTLAWQRKPD).

It belongs to the nitrite and sulfite reductase 4Fe-4S domain family. The anaerobic sulfite reductase seems to consist of three subunits. [4Fe-4S] cluster serves as cofactor. It depends on siroheme as a cofactor.

It localises to the cytoplasm. It catalyses the reaction hydrogen sulfide + 3 NAD(+) + 3 H2O = sulfite + 3 NADH + 4 H(+). It participates in sulfur metabolism; sulfite reduction. Its function is as follows. This enzyme catalyzes the hydrogen sulfide production from sulfite. It is strictly anaerobic. It is regulated by electron acceptors rather than by cysteine. This is Anaerobic sulfite reductase subunit C (asrC) from Salmonella typhi.